Reading from the N-terminus, the 151-residue chain is Probable cGMP 3',5'-cyclic phosphodiesterase subunit delta (151 aa).

Belongs to the PDE6D/unc-119 family. As to quaternary structure, interacts with Pde6.

Its subcellular location is the nucleus. It localises to the cytoplasm. The polypeptide is Probable cGMP 3',5'-cyclic phosphodiesterase subunit delta (Drosophila simulans (Fruit fly)).